The sequence spans 148 residues: Lysozyme C (148 aa).

An N-terminal signal peptide occupies residues 1 to 18; the sequence is MKALIILGLVLLSVTVQG. The 130-residue stretch at 19 to 148 folds into the C-type lysozyme domain; sequence KIFERCELAR…VSQYVKGCGV (130 aa). 4 disulfides stabilise this stretch: Cys24–Cys146, Cys48–Cys134, Cys83–Cys99, and Cys95–Cys113. Residues Glu53 and Asp71 contribute to the active site.

Belongs to the glycosyl hydrolase 22 family. In terms of assembly, monomer.

The protein localises to the secreted. The enzyme catalyses Hydrolysis of (1-&gt;4)-beta-linkages between N-acetylmuramic acid and N-acetyl-D-glucosamine residues in a peptidoglycan and between N-acetyl-D-glucosamine residues in chitodextrins.. Functionally, lysozymes have primarily a bacteriolytic function; those in tissues and body fluids are associated with the monocyte-macrophage system and enhance the activity of immunoagents. The protein is Lysozyme C (LYZ) of Pygathrix nemaeus (Red-shanked douc langur).